We begin with the raw amino-acid sequence, 236 residues long: Flagellar L-ring protein (236 aa).

The N-terminal stretch at 1 to 16 (MRMRITAILAAGLLAG) is a signal peptide. Cys17 carries N-palmitoyl cysteine lipidation. Residue Cys17 is the site of S-diacylglycerol cysteine attachment. A disordered region spans residues 96–143 (ENETDRSRKNSSGFNLGASGESQTSDFAWSGDLEYGSNTKTEGDGKTE). Residues 105–122 (NSSGFNLGASGESQTSDF) show a composition bias toward polar residues.

Belongs to the FlgH family. In terms of assembly, the basal body constitutes a major portion of the flagellar organelle and consists of four rings (L,P,S, and M) mounted on a central rod.

It is found in the cell outer membrane. Its subcellular location is the bacterial flagellum basal body. In terms of biological role, assembles around the rod to form the L-ring and probably protects the motor/basal body from shearing forces during rotation. This chain is Flagellar L-ring protein, found in Sinorhizobium medicae (strain WSM419) (Ensifer medicae).